Consider the following 404-residue polypeptide: Dual-specificity RNA methyltransferase RlmN (404 aa).

Catalysis depends on Glu-118, which acts as the Proton acceptor. The Radical SAM core domain occupies 125 to 357; the sequence is VGRAGALCVS…NKAGYSSPIR (233 aa). Residues Cys-132 and Cys-368 are joined by a disulfide bond. Positions 139, 143, and 146 each coordinate [4Fe-4S] cluster. Residues 194–195, Ser-226, 248–250, and Asn-325 each bind S-adenosyl-L-methionine; these read GE and SLH. The active-site S-methylcysteine intermediate is Cys-368.

It belongs to the radical SAM superfamily. RlmN family. It depends on [4Fe-4S] cluster as a cofactor.

It localises to the cytoplasm. It catalyses the reaction adenosine(2503) in 23S rRNA + 2 reduced [2Fe-2S]-[ferredoxin] + 2 S-adenosyl-L-methionine = 2-methyladenosine(2503) in 23S rRNA + 5'-deoxyadenosine + L-methionine + 2 oxidized [2Fe-2S]-[ferredoxin] + S-adenosyl-L-homocysteine. The enzyme catalyses adenosine(37) in tRNA + 2 reduced [2Fe-2S]-[ferredoxin] + 2 S-adenosyl-L-methionine = 2-methyladenosine(37) in tRNA + 5'-deoxyadenosine + L-methionine + 2 oxidized [2Fe-2S]-[ferredoxin] + S-adenosyl-L-homocysteine. Specifically methylates position 2 of adenine 2503 in 23S rRNA and position 2 of adenine 37 in tRNAs. m2A2503 modification seems to play a crucial role in the proofreading step occurring at the peptidyl transferase center and thus would serve to optimize ribosomal fidelity. The chain is Dual-specificity RNA methyltransferase RlmN from Caulobacter vibrioides (strain ATCC 19089 / CIP 103742 / CB 15) (Caulobacter crescentus).